Consider the following 382-residue polypeptide: MAFIYYLTHIHLDFGAVSLLKSECERIGIRRPLLVTDKGVVAAGVAQRAIDAMQGLQVAVFDETPSNPTEAMVRKAAAQYREAGCDGLVAVGGGSSIDLAKGIAILATHEGELTTYATIEGGSARITDKAAPLIAVPTTSGTGSEVARGAIIILDDGRKLGFHSWHLLPKSAVCDPELTLGLPAGLTAATGMDAIAHCIETFLAPAFNPPADGIALDGLERGWGHIERATRDGQDRDARLNMMSASMQGAMAFQKGLGCVHSLSHPLGGLKIDGRTGLHHGTLNAVVMPAVLRFNADAPTVVRDDRYARLRRAMHLPDGADIAQAVHDMTVRLGLPTGLRQMGVTEDMFDKVIAGALVDHCHKTNPKEASAADYRRMLEQSM.

NAD(+)-binding positions include aspartate 37, asparagine 67, glycine 94–aspartate 98, threonine 138–threonine 142, and lysine 159. Residues aspartate 193, histidine 197, histidine 261, and histidine 280 each coordinate Fe cation. Residue histidine 280 participates in NAD(+) binding.

Belongs to the iron-containing alcohol dehydrogenase family. Fe cation serves as cofactor.

It carries out the reaction 4-hydroxybutanoate + NAD(+) = succinate semialdehyde + NADH + H(+). Its activity is regulated as follows. Shows competitive inhibition of GHBDH activity by the product succinic semialdehyde, and non-competitive inhibitions by the three other substrate-product combinations. The conversion of GHB to SSA is activated by two different saturating purified nudix hydrolases, B.methanolicus activator ACT and E.coli NudF. The nudix hydrolases do not activate the reverse reaction. In terms of biological role, involved in the degradation of 4-hydroxybutyrate. Catalyzes the interconversion of gamma-hydroxybutyrate (GHB) and succinic semialdehyde (SSA). The protein is 4-hydroxybutyrate dehydrogenase of Cupriavidus necator (Alcaligenes eutrophus).